Here is a 690-residue protein sequence, read N- to C-terminus: Protein arginine N-methyltransferase 7 (690 aa).

2 SAM-dependent MTase PRMT-type domains span residues Gln14–Trp357 and Thr366–Leu690.

It belongs to the class I-like SAM-binding methyltransferase superfamily. Protein arginine N-methyltransferase family. PRMT7 subfamily.

Its function is as follows. Essential arginine methyltransferase that can both catalyze the formation of omega-N monomethylarginine (MMA) and symmetrical dimethylarginine (sDMA). Specifically mediates the symmetrical dimethylation of arginine residues in the small nuclear ribonucleoproteins SmD1 and SmD3. The protein is Protein arginine N-methyltransferase 7 (Art7) of Drosophila yakuba (Fruit fly).